Reading from the N-terminus, the 327-residue chain is uncharacterized protein (327 aa).

Positions 129–306 are disordered; that stretch reads TPLQNQEATT…DNKKTVTTSS (178 aa). Positions 130 to 144 are enriched in polar residues; that stretch reads PLQNQEATTSPTIES. Basic and acidic residues-rich tracts occupy residues 184 to 196 and 233 to 276; these read KSVENKKGSDRNV and TKDE…EKIV.

This is an uncharacterized protein from Caenorhabditis elegans.